The following is a 235-amino-acid chain: Putative cobalt transport protein CbiM 2 (235 aa).

7 helical membrane-spanning segments follow: residues 8 to 28 (LPAIWCIVWFVVSIPVVAYGV), 40 to 60 (GILPVLAVAGAFIFVLSSLKM), 74 to 94 (GIGAIIFGPAITAVLSTIVLI), 107 to 127 (TLGANVFSMGIVGPIVAYLIY), 135 to 155 (LNFYLIVFLAATLGDWATYIV), 160 to 180 (LALAFPAGDILTFGGFFSSFS), and 185 to 205 (IFAITQVPLAIVEGAVSALLF).

Belongs to the CbiM family. In terms of assembly, forms an energy-coupling factor (ECF) transporter complex composed of an ATP-binding protein (A component, CbiO), a transmembrane protein (T component, CbiQ) and 2 possible substrate-capture proteins (S components, CbiM and CbiN) of unknown stoichimetry.

The protein localises to the cell membrane. Its pathway is cofactor biosynthesis; adenosylcobalamin biosynthesis. Functionally, part of the energy-coupling factor (ECF) transporter complex CbiMNOQ involved in cobalt import. This chain is Putative cobalt transport protein CbiM 2, found in Methanosarcina barkeri (strain Fusaro / DSM 804).